The sequence spans 495 residues: BUB3-interacting and GLEBS motif-containing protein ZNF207 (495 aa).

The interval 1–92 (MGRKKKKQLK…EGIPEKDMDE (92 aa)) is microtubule-binding region. 2 consecutive C2H2-type zinc fingers follow at residues 11-34 (PWCW…KAKH) and 35-58 (FKCH…MQVH). Residues 99-111 (QKTQESQKKKQQD) show a composition bias toward basic and acidic residues. Disordered stretches follow at residues 99-161 (QKTQ…PGIP), 252-292 (PPAP…SNSE), and 316-372 (VGTD…ATLT). A compositionally biased stretch (acidic residues) spans 112 to 121 (DSDEYDDDES). The span at 127–136 (FQPQPVQPQQ) shows a compositional bias: polar residues. Over residues 142–161 (MAQPGLPPVPGAPGMPPGIP) the composition is skewed to pro residues. Composition is skewed to low complexity over residues 283 to 292 (SSSTASSNSE) and 326 to 372 (TPAA…ATLT). The GLEBS stretch occupies residues 376–408 (ATSKLIHPDEDISLEERRAQLPKYQRNLPRPGQ). A disordered region spans residues 462–495 (PYGQGPPMVPPYQGGPPRPPMGMRPPVMSQGGRY). Residues 464 to 484 (GQGPPMVPPYQGGPPRPPMGM) are compositionally biased toward pro residues.

In terms of assembly, interacts (via GLEBS region) with BUB3. As to expression, in day-13 embryo, strongly expressed in the nervous system (brain, spinal cord and dorsal root ganglia), with strong to weak expression in other regions. Continues to be strongly expressed in the neonatal brain while expression is weak in the brain and spinal cord of adult.

It localises to the nucleus. Its subcellular location is the chromosome. The protein resides in the centromere. It is found in the kinetochore. The protein localises to the cytoplasm. It localises to the cytoskeleton. Its subcellular location is the spindle. Functionally, kinetochore- and microtubule-binding protein that plays a key role in spindle assembly. ZNF207/BuGZ is mainly composed of disordered low-complexity regions and undergoes phase transition or coacervation to form temperature-dependent liquid droplets. Coacervation promotes microtubule bundling and concentrates tubulin, promoting microtubule polymerization and assembly of spindle and spindle matrix by concentrating its building blocks. Also acts as a regulator of mitotic chromosome alignment by mediating the stability and kinetochore loading of BUB3. Mechanisms by which BUB3 is protected are unclear: according to a first report, ZNF207/BuGZ may act by blocking ubiquitination and proteasomal degradation of BUB3. According to another report, the stabilization is independent of the proteasome. This is BUB3-interacting and GLEBS motif-containing protein ZNF207 from Mus musculus (Mouse).